We begin with the raw amino-acid sequence, 180 residues long: MTDAGEATPVAELIASLTRQVPDFPKPGIQFKDLTPLFAEATAMTAVTGALARHASGADLVAGIDSRGFLVAAAVADRLHTGVLAIRKGGKLPPPVHAERYDLEYGSATLEIPADGIDLRGRRIVIIDDVLATGGTLAAAARLLRRTGATVTAAAVVFELGALGGRAALAPLPVHSLTCQ.

It belongs to the purine/pyrimidine phosphoribosyltransferase family. In terms of assembly, homodimer.

It localises to the cytoplasm. It catalyses the reaction AMP + diphosphate = 5-phospho-alpha-D-ribose 1-diphosphate + adenine. The protein operates within purine metabolism; AMP biosynthesis via salvage pathway; AMP from adenine: step 1/1. Its function is as follows. Catalyzes a salvage reaction resulting in the formation of AMP, that is energically less costly than de novo synthesis. This is Adenine phosphoribosyltransferase from Mycolicibacterium paratuberculosis (strain ATCC BAA-968 / K-10) (Mycobacterium paratuberculosis).